The following is a 131-amino-acid chain: RutC family protein YjgH (131 aa).

Belongs to the RutC family.

The sequence is that of RutC family protein YjgH (yjgH) from Escherichia coli (strain K12).